Consider the following 279-residue polypeptide: Biotin synthase (279 aa).

The 227-residue stretch at 2–228 (KTIMLCAISS…NARIMIAGGR (227 aa)) folds into the Radical SAM core domain. The [4Fe-4S] cluster site is built by cysteine 17, cysteine 21, and cysteine 24. Residues cysteine 61, cysteine 96, cysteine 154, and arginine 221 each coordinate [2Fe-2S] cluster.

This sequence belongs to the radical SAM superfamily. Biotin synthase family. In terms of assembly, homodimer. The cofactor is [4Fe-4S] cluster. Requires [2Fe-2S] cluster as cofactor.

It catalyses the reaction (4R,5S)-dethiobiotin + (sulfur carrier)-SH + 2 reduced [2Fe-2S]-[ferredoxin] + 2 S-adenosyl-L-methionine = (sulfur carrier)-H + biotin + 2 5'-deoxyadenosine + 2 L-methionine + 2 oxidized [2Fe-2S]-[ferredoxin]. Its pathway is cofactor biosynthesis; biotin biosynthesis; biotin from 7,8-diaminononanoate: step 2/2. Functionally, catalyzes the conversion of dethiobiotin (DTB) to biotin by the insertion of a sulfur atom into dethiobiotin via a radical-based mechanism. The protein is Biotin synthase of Campylobacter curvus (strain 525.92).